The sequence spans 187 residues: Probable nicotinate-nucleotide adenylyltransferase (187 aa).

This sequence belongs to the NadD family.

The enzyme catalyses nicotinate beta-D-ribonucleotide + ATP + H(+) = deamido-NAD(+) + diphosphate. The protein operates within cofactor biosynthesis; NAD(+) biosynthesis; deamido-NAD(+) from nicotinate D-ribonucleotide: step 1/1. Catalyzes the reversible adenylation of nicotinate mononucleotide (NaMN) to nicotinic acid adenine dinucleotide (NaAD). This chain is Probable nicotinate-nucleotide adenylyltransferase, found in Anaeromyxobacter sp. (strain K).